The following is a 233-amino-acid chain: 2-C-methyl-D-erythritol 4-phosphate cytidylyltransferase (233 aa).

It belongs to the IspD/TarI cytidylyltransferase family. IspD subfamily.

It catalyses the reaction 2-C-methyl-D-erythritol 4-phosphate + CTP + H(+) = 4-CDP-2-C-methyl-D-erythritol + diphosphate. Its pathway is isoprenoid biosynthesis; isopentenyl diphosphate biosynthesis via DXP pathway; isopentenyl diphosphate from 1-deoxy-D-xylulose 5-phosphate: step 2/6. Catalyzes the formation of 4-diphosphocytidyl-2-C-methyl-D-erythritol from CTP and 2-C-methyl-D-erythritol 4-phosphate (MEP). The protein is 2-C-methyl-D-erythritol 4-phosphate cytidylyltransferase of Aromatoleum aromaticum (strain DSM 19018 / LMG 30748 / EbN1) (Azoarcus sp. (strain EbN1)).